A 491-amino-acid chain; its full sequence is Cytosolic Fe-S cluster assembly factor NAR1 (491 aa).

8 residues coordinate [4Fe-4S] cluster: C20, C59, C62, C65, C177, C231, C412, and C416.

This sequence belongs to the NARF family. In terms of assembly, interacts with CIA1.

The protein resides in the cytoplasm. It localises to the nucleus. In terms of biological role, essential component of a cytosolic Fe/S protein assembly machinery. Required for maturation of extramitochondrial Fe/S proteins. May play a role in the transfer of pre-assembled Fe/S clusters to target apoproteins. This chain is Cytosolic Fe-S cluster assembly factor NAR1 (NAR1), found in Saccharomyces cerevisiae (strain ATCC 204508 / S288c) (Baker's yeast).